A 420-amino-acid chain; its full sequence is UDP-N-acetylglucosamine 1-carboxyvinyltransferase (420 aa).

22 to 23 (KN) lines the phosphoenolpyruvate pocket. Residue arginine 91 participates in UDP-N-acetyl-alpha-D-glucosamine binding. Cysteine 115 serves as the catalytic Proton donor. Cysteine 115 is subject to 2-(S-cysteinyl)pyruvic acid O-phosphothioketal. UDP-N-acetyl-alpha-D-glucosamine contacts are provided by residues 120 to 124 (RPVDL), 160 to 163 (KVSV), aspartate 305, and isoleucine 327.

It belongs to the EPSP synthase family. MurA subfamily.

Its subcellular location is the cytoplasm. The enzyme catalyses phosphoenolpyruvate + UDP-N-acetyl-alpha-D-glucosamine = UDP-N-acetyl-3-O-(1-carboxyvinyl)-alpha-D-glucosamine + phosphate. The protein operates within cell wall biogenesis; peptidoglycan biosynthesis. Cell wall formation. Adds enolpyruvyl to UDP-N-acetylglucosamine. The polypeptide is UDP-N-acetylglucosamine 1-carboxyvinyltransferase (Erwinia tasmaniensis (strain DSM 17950 / CFBP 7177 / CIP 109463 / NCPPB 4357 / Et1/99)).